The primary structure comprises 884 residues: Probable ribonuclease ZC3H12C (884 aa).

Residues 66-108 (KPTMDTVNSGKEGKGVSEENVSSGDSEGSTSSDHESEQLSSLS) are disordered. The segment covering 87-96 (SSGDSEGSTS) has biased composition (low complexity). Ser231 carries the phosphoserine modification. The region spanning 246–401 (LRPVVIDGSN…LGRHGPSLDN (156 aa)) is the RNase NYN domain. The segment at 411-436 (EHKKQPCPYGKKCTYGHKCKYYHPER) adopts a C3H1-type zinc-finger fold. Positions 456 to 478 (AAKTTNEGGLVKSNSVPCSTKAD) are enriched in polar residues. Disordered stretches follow at residues 456 to 548 (AAKT…SGVH), 716 to 739 (VGARSSCPGDYPSPPSSAHSKAPH), and 755 to 776 (SRLYDSSPSRQRKPYSRQEGLG). The segment covering 500 to 516 (VYQDIEEKLPTKNKLET) has biased composition (basic and acidic residues). Residues 518–543 (SVPSLVSIPATSTAKPQSTTPLSNGL) show a composition bias toward polar residues.

Belongs to the ZC3H12 family. Mg(2+) serves as cofactor.

Functionally, may function as RNase and regulate the levels of target RNA species. In Mus musculus (Mouse), this protein is Probable ribonuclease ZC3H12C (Zc3h12c).